The sequence spans 166 residues: MTESTSRRPAYARLLDRAARILAVRDHSEQELRRKLAAPIMGKNGPEEIDATAEDYERVIAWCHEHGYLDDSRFVARFIASRSRKGYGPARIRQELNQKGISREATEKAMRECDIDWCALARDQATRKYGEPLPTVFSEKVKIQRFLLYRGYLMEDIQDIWRNFAD.

It belongs to the RecX family.

Its subcellular location is the cytoplasm. In terms of biological role, modulates RecA activity. This chain is Regulatory protein RecX, found in Escherichia coli O7:K1 (strain IAI39 / ExPEC).